A 348-amino-acid polypeptide reads, in one-letter code: Flagellar P-ring protein (348 aa).

An N-terminal signal peptide occupies residues 1–24 (MRRKNNNKIWIWVATLILSISALY).

This sequence belongs to the FlgI family. In terms of assembly, the basal body constitutes a major portion of the flagellar organelle and consists of four rings (L,P,S, and M) mounted on a central rod.

It is found in the periplasm. It localises to the bacterial flagellum basal body. In terms of biological role, assembles around the rod to form the L-ring and probably protects the motor/basal body from shearing forces during rotation. The protein is Flagellar P-ring protein of Helicobacter hepaticus (strain ATCC 51449 / 3B1).